Here is a 361-residue protein sequence, read N- to C-terminus: Probable mannose-1-phosphate guanylyltransferase 1 (361 aa).

Positions 6 and 7 each coordinate GDP-alpha-D-mannose. Residues Gly9, Gly11, Thr12, Arg13, and Lys23 each coordinate diphosphate. Residues Gly85, Asn109, Asp111, Gly146, and Asn173 each contribute to the GDP-alpha-D-mannose site.

Belongs to the transferase hexapeptide repeat family.

It carries out the reaction alpha-D-mannose 1-phosphate + GTP + H(+) = GDP-alpha-D-mannose + diphosphate. It participates in nucleotide-sugar biosynthesis; GDP-alpha-D-mannose biosynthesis; GDP-alpha-D-mannose from alpha-D-mannose 1-phosphate (GTP route): step 1/1. Catalyzes a reaction of the Smirnoff-Wheeler pathway, the major route to ascorbate biosynthesis in plants. This Oryza sativa subsp. japonica (Rice) protein is Probable mannose-1-phosphate guanylyltransferase 1.